The following is a 112-amino-acid chain: Colipase (112 aa).

The N-terminal stretch at 1–17 (MEKVLALLLVTLTVAYA) is a signal peptide. Positions 18 to 22 (VPDPR) are cleaved as a propeptide — enterostatin, activation peptide. Disulfide bonds link Cys34–Cys45, Cys40–Cys56, Cys44–Cys78, Cys66–Cys86, and Cys80–Cys104.

This sequence belongs to the colipase family. In terms of assembly, forms a 1:1 stoichiometric complex with pancreatic lipase. As to expression, expressed by the pancreas.

It localises to the secreted. In terms of biological role, colipase is a cofactor of pancreatic lipase. It allows the lipase to anchor itself to the lipid-water interface. Without colipase the enzyme is washed off by bile salts, which have an inhibitory effect on the lipase. Its function is as follows. Enterostatin has a biological activity as a satiety signal. This Sus scrofa (Pig) protein is Colipase (CLPS).